The primary structure comprises 305 residues: Tyrosine recombinase XerC (305 aa).

One can recognise a Core-binding (CB) domain in the interval 4-95 (TSIQELINKW…AVKNFYKFLE (92 aa)). Positions 116–298 (LLPKSLSEDD…SIKHLVSVYT (183 aa)) constitute a Tyr recombinase domain. Active-site residues include Arg-159, Lys-182, His-250, Arg-253, and His-276. Tyr-285 functions as the O-(3'-phospho-DNA)-tyrosine intermediate in the catalytic mechanism.

It belongs to the 'phage' integrase family. XerC subfamily. As to quaternary structure, forms a cyclic heterotetrameric complex composed of two molecules of XerC and two molecules of XerD.

Its subcellular location is the cytoplasm. Functionally, site-specific tyrosine recombinase, which acts by catalyzing the cutting and rejoining of the recombining DNA molecules. The XerC-XerD complex is essential to convert dimers of the bacterial chromosome into monomers to permit their segregation at cell division. It also contributes to the segregational stability of plasmids. The polypeptide is Tyrosine recombinase XerC (Rickettsia canadensis (strain McKiel)).